Reading from the N-terminus, the 381-residue chain is Putative steryl acetyl hydrolase mug81 (381 aa).

Over 1–9 (MISLSLLYR) the chain is Cytoplasmic. A helical; Signal-anchor for type II membrane protein transmembrane segment spans residues 10-30 (ILTLPIILVGTTILYFTIGTN). At 31–381 (FPHDELRHNL…YTFLRETFEE (351 aa)) the chain is on the lumenal side. Positions 125 to 127 (HGG) match the Involved in the stabilization of the negatively charged intermediate by the formation of the oxyanion hole motif. N-linked (GlcNAc...) asparagine glycosylation occurs at Asn193. Ser200 is an active-site residue.

Belongs to the 'GDXG' lipolytic enzyme family.

It localises to the cytoplasm. The protein resides in the endoplasmic reticulum membrane. In terms of biological role, required for the deacetylation of acetylated sterols. Has a role in meiosis. The sequence is that of Putative steryl acetyl hydrolase mug81 (mug180) from Schizosaccharomyces pombe (strain 972 / ATCC 24843) (Fission yeast).